We begin with the raw amino-acid sequence, 107 residues long: Phosphoribosyl-ATP pyrophosphatase (107 aa).

It belongs to the PRA-PH family.

It localises to the cytoplasm. The enzyme catalyses 1-(5-phospho-beta-D-ribosyl)-ATP + H2O = 1-(5-phospho-beta-D-ribosyl)-5'-AMP + diphosphate + H(+). Its pathway is amino-acid biosynthesis; L-histidine biosynthesis; L-histidine from 5-phospho-alpha-D-ribose 1-diphosphate: step 2/9. The chain is Phosphoribosyl-ATP pyrophosphatase from Methylobacterium nodulans (strain LMG 21967 / CNCM I-2342 / ORS 2060).